Consider the following 423-residue polypeptide: Glycine amidinotransferase, mitochondrial (423 aa).

The N-terminal 43 residues, 1–43 (MLRVRCLRGGSRGAEAVHYIGSRLGGSLTGWVQRTFQSTQAAT), are a transit peptide targeting the mitochondrion. Phosphoserine occurs at positions 46 and 49. Aspartate 170 provides a ligand contact to arginine. Active-site residues include aspartate 254 and histidine 303. Positions 305, 322, 354, and 355 each coordinate arginine. Lysine 385 is subject to N6-acetyllysine. The Amidino-cysteine intermediate role is filled by cysteine 407.

Belongs to the amidinotransferase family. As to quaternary structure, homodimer. As to expression, expressed in kidney, brain, gonads, uterus, and embryonic head, chest and abdomen. Maternally expressed in the placenta and yolk sac of embryos.

It is found in the mitochondrion inner membrane. The enzyme catalyses L-arginine + glycine = guanidinoacetate + L-ornithine. It catalyses the reaction 4-aminobutanoate + L-arginine = 4-guanidinobutanoate + L-ornithine. The catalysed reaction is beta-alanine + L-arginine = 3-guanidinopropanoate + L-ornithine. It carries out the reaction taurine + L-arginine = taurocyamine + L-ornithine. Its pathway is amine and polyamine biosynthesis; creatine biosynthesis; creatine from L-arginine and glycine: step 1/2. Transamidinase that catalyzes the transfer of the amidino group of L-arginine onto the amino moiety of acceptor metabolites such as glycine, beta-alanine, gamma-aminobutyric acid (GABA) and taurine yielding the corresponding guanidine derivatives. Catalyzes the rate-limiting step of creatine biosynthesis, namely the transfer of the amidino group from L-arginine to glycine to generate guanidinoacetate, which is then methylated by GAMT to form creatine. Provides creatine as a source for ATP generation in tissues with high energy demands, in particular skeletal muscle, heart and brain. The sequence is that of Glycine amidinotransferase, mitochondrial (Gatm) from Mus musculus (Mouse).